Here is a 127-residue protein sequence, read N- to C-terminus: Aspartate 1-decarboxylase (127 aa).

Serine 25 (schiff-base intermediate with substrate; via pyruvic acid) is an active-site residue. Serine 25 carries the post-translational modification Pyruvic acid (Ser). Threonine 57 lines the substrate pocket. The Proton donor role is filled by tyrosine 58. 73 to 75 (GAA) contributes to the substrate binding site.

Belongs to the PanD family. In terms of assembly, heterooctamer of four alpha and four beta subunits. Pyruvate is required as a cofactor. Post-translationally, is synthesized initially as an inactive proenzyme, which is activated by self-cleavage at a specific serine bond to produce a beta-subunit with a hydroxyl group at its C-terminus and an alpha-subunit with a pyruvoyl group at its N-terminus.

It localises to the cytoplasm. The enzyme catalyses L-aspartate + H(+) = beta-alanine + CO2. Its pathway is cofactor biosynthesis; (R)-pantothenate biosynthesis; beta-alanine from L-aspartate: step 1/1. Catalyzes the pyruvoyl-dependent decarboxylation of aspartate to produce beta-alanine. The chain is Aspartate 1-decarboxylase from Clostridium botulinum (strain 657 / Type Ba4).